Reading from the N-terminus, the 419-residue chain is O-antigen ligase (419 aa).

Topologically, residues 1-19 are cytoplasmic; the sequence is MLTSFKLHSLKPYTLKSSM. The helical transmembrane segment at 20–38 threads the bilayer; sequence ILEIITYILCFFSMIIAFV. Topologically, residues 39–43 are periplasmic; that stretch reads DNTFS. The helical transmembrane segment at 44–61 threads the bilayer; the sequence is IKIYNITAIVCLLSLILR. At 62 to 71 the chain is on the cytoplasmic side; that stretch reads GRQENYNIKN. The chain crosses the membrane as a helical span at residues 72–91; the sequence is LILPLSIFLIGLLDLIWYSA. Topologically, residues 92 to 107 are periplasmic; it reads FKVDNSPFRATYHSYL. A helical transmembrane segment spans residues 108-125; that stretch reads NTAKIFIFGSFIVFLTLT. Residues 126–134 are Cytoplasmic-facing; the sequence is SQLKSKKES. A helical transmembrane segment spans residues 135-153; the sequence is VLYTLYSLSFLIAGYAMYI. At 154–167 the chain is on the periplasmic side; it reads NSIHENDRISFGVG. Residues 168–187 traverse the membrane as a helical segment; the sequence is TATGAAYSTMLIGIVSGVAI. Topologically, residues 188-194 are cytoplasmic; that stretch reads LYTKKNH. The chain crosses the membrane as a helical span at residues 195-211; it reads PFLFLLNSCAVLYVLAL. At 212–216 the chain is on the periplasmic side; the sequence is TQTRA. A helical membrane pass occupies residues 217-234; it reads TLLLFPIICVAALIAYYN. The Cytoplasmic segment spans residues 235-240; that stretch reads KSPKKF. Residues 241–259 form a helical membrane-spanning segment; the sequence is TSSIVLLIAILASIVIIFN. Residues 260-348 are Periplasmic-facing; the sequence is KPIQNRYNEA…NEIIEAGSLK (89 aa). The helical transmembrane segment at 349-367 threads the bilayer; the sequence is GLMGIFSTLFLYFSLFYIA. Over 368–372 the chain is Cytoplasmic; sequence YKKRA. Residues 373–391 form a helical membrane-spanning segment; sequence LGLLILTLGIVGIGLSDVI. Topologically, residues 392–396 are periplasmic; the sequence is IWARS. The chain crosses the membrane as a helical span at residues 397–412; it reads IPIIIISAIVLLLVIN. The Cytoplasmic segment spans residues 413–419; sequence NRNNTIN.

As to quaternary structure, homodimer.

The protein localises to the cell inner membrane. It catalyses the reaction a lipid-linked O antigen + a lipid A-core oligosaccharide = a lipopolysaccharide + a polyisoprenyl diphosphate.. It functions in the pathway bacterial outer membrane biogenesis; lipopolysaccharide biosynthesis. With respect to regulation, activity does not require ATP and magnesium ions. Transferase involved in the biosynthesis of the lipopolysaccharide (LPS). In vitro, catalyzes the transfer of a polymerized O-antigen molecule from its polyprenyl diphosphate membrane anchor to a terminal sugar of the lipid A-core oligosaccharide, finalizing the biosynthesis of the lipopolysaccharide. The enzyme is functional and can be used to give diverse hybrid O-antigens in vitro, but K12 strains do not produce the O-antigen in vivo due to mutations in the rfb gene cluster. K12 strains are phenotypically rough, their lipopolysaccharide having a complete core structure, but no O-antigen. In highly mucoid K12 strains, WaaL can ligate colanic acid (CA or M-antigen) repeats to a significant proportion of lipopolysaccharide (LPS) core acceptor molecules, forming the LPS glycoform M(LPS). The attachment point was identified as O-7 of the L-glycero-D-manno-heptose of the outer LPS core, the same position used for O-antigen ligation. Cannot catalyze ATP hydrolysis in vitro. This chain is O-antigen ligase, found in Escherichia coli (strain K12).